Consider the following 229-residue polypeptide: MGKKYIESAKLIDKSALYNPVEALDLTLKTAKANFDETIELHVRLGVDPRHADQQVRGAVVLPNGTGKTVRVLVFAKGDKAAEAQQAGADFVGADELVQKIQSENWFDYDVVVATPDMMGIVGRIGRVLGPKGLMPNPKSGTVTFDVAKAIEEIKAGKVEYRVDKTAIVHCPIGKKSFGTEKLKENFTALMEALVKAKPAAAKGQYLKSVSVSSTMGPSAKVNPTRALD.

The protein belongs to the universal ribosomal protein uL1 family. As to quaternary structure, part of the 50S ribosomal subunit.

Binds directly to 23S rRNA. The L1 stalk is quite mobile in the ribosome, and is involved in E site tRNA release. Its function is as follows. Protein L1 is also a translational repressor protein, it controls the translation of the L11 operon by binding to its mRNA. This chain is Large ribosomal subunit protein uL1, found in Clostridium beijerinckii (strain ATCC 51743 / NCIMB 8052) (Clostridium acetobutylicum).